The following is a 3584-amino-acid chain: D-lysergyl-peptide-synthetase subunit 1 (3584 aa).

Residues 25 to 44 (IESINGDKNKSERHTASSSA) are disordered. Positions 29–39 (NGDKNKSERHT) are enriched in basic and acidic residues. The adenylation (A) domain 1 stretch occupies residues 307-706 (SCCSRPNSQA…LGRKDDQVKI (400 aa)). A Carrier 1 domain is found at 848–917 (REKLLQALFA…TLREIVIVST (70 aa)). Ser880 carries the O-(pantetheine 4'-phosphoryl)serine modification. The condensation (C) domain 1 stretch occupies residues 962-1353 (EDIYPCTHLQ…EHILTQIHSN (392 aa)). Positions 1396-1803 (QAKCQAQPDA…RRKDAQVKIR (408 aa)) are adenylation (A) domain 2. In terms of domain architecture, Carrier 2 spans 1948–2016 (TEHEISAIWA…TIRKLALARG (69 aa)). Ser1980 carries the O-(pantetheine 4'-phosphoryl)serine modification. The interval 2066-2483 (ERIYPCSPIQ…ALPVLDEDQM (418 aa)) is condensation (C) domain 2. The segment at 2508-2906 (QCIRCPDSPS…GRNDDQVKVR (399 aa)) is adenylation (A) domain 3. The 69-residue stretch at 3041 to 3109 (MEAELQQLVG…RLSDLARIVE (69 aa)) folds into the Carrier 3 domain. O-(pantetheine 4'-phosphoryl)serine is present on Ser3073. The tract at residues 3174-3472 (LYFSKPMASE…VAKSTTWSSD (299 aa)) is cyclization (Cyc) domain.

It belongs to the NRP synthetase family.

Its pathway is alkaloid biosynthesis; ergot alkaloid biosynthesis. In terms of biological role, D-lysergyl-peptide-synthetase subunit 1; part of the gene cluster that mediates the biosynthesis of fungal ergot alkaloid. DmaW catalyzes the first step of ergot alkaloid biosynthesis by condensing dimethylallyl diphosphate (DMAP) and tryptophan to form 4-dimethylallyl-L-tryptophan. The second step is catalyzed by the methyltransferase easF that methylates 4-dimethylallyl-L-tryptophan in the presence of S-adenosyl-L-methionine, resulting in the formation of 4-dimethylallyl-L-abrine. The catalase easC and the FAD-dependent oxidoreductase easE then transform 4-dimethylallyl-L-abrine to chanoclavine-I which is further oxidized by easD in the presence of NAD(+), resulting in the formation of chanoclavine-I aldehyde. Agroclavine dehydrogenase easG then mediates the conversion of chanoclavine-I aldehyde to agroclavine via a non-enzymatic adduct reaction: the substrate is an iminium intermediate that is formed spontaneously from chanoclavine-I aldehyde in the presence of glutathione. The presence of easA is not required to complete this reaction. Further conversion of agroclavine to paspalic acid is a two-step process involving oxidation of agroclavine to elymoclavine and of elymoclavine to paspalic acid, the second step being performed by the elymoclavine oxidase cloA. Paspalic acid is then further converted to D-lysergic acid. Ergopeptines are assembled from D-lysergic acid and three different amino acids by the D-lysergyl-peptide-synthetases composed each of a monomudular and a trimodular nonribosomal peptide synthetase subunit. LpsB and lpsC encode the monomodular subunits responsible for D-lysergic acid activation and incorporation into the ergopeptine backbone. LpsA1 and A2 subunits encode the trimodular nonribosomal peptide synthetase assembling the tripeptide portion of ergopeptines. LpsA1 is responsible for formation of the major ergopeptine, ergotamine, and lpsA2 for alpha-ergocryptine, the minor ergopeptine of the total alkaloid mixture elaborated by C.purpurea. D-lysergyl-tripeptides are assembled by the nonribosomal peptide synthetases and released as N-(D-lysergyl-aminoacyl)-lactams. Cyclolization of the D-lysergyl-tripeptides is performed by the Fe(2+)/2-ketoglutarate-dependent dioxygenase easH which introduces a hydroxyl group into N-(D-lysergyl-aminoacyl)-lactam at alpha-C of the aminoacyl residue followed by spontaneous condensation with the terminal lactam carbonyl group. The protein is D-lysergyl-peptide-synthetase subunit 1 of Claviceps purpurea (strain 20.1) (Ergot fungus).